Here is a 413-residue protein sequence, read N- to C-terminus: Precorrin-6Y C(5,15)-methyltransferase [decarboxylating] (413 aa).

Belongs to the precorrin methyltransferase family.

It catalyses the reaction precorrin-6B + 2 S-adenosyl-L-methionine = precorrin-8X + 2 S-adenosyl-L-homocysteine + CO2 + 3 H(+). It functions in the pathway cofactor biosynthesis; adenosylcobalamin biosynthesis; cob(II)yrinate a,c-diamide from precorrin-2 (aerobic route): step 7/10. In terms of biological role, catalyzes the methylation of both C-5 and C-15 in precorrin-6Y to form precorrin-8X. The protein is Precorrin-6Y C(5,15)-methyltransferase [decarboxylating] (cobL) of Sinorhizobium sp.